Consider the following 238-residue polypeptide: Uroporphyrinogen-III C-methyltransferase (238 aa).

S-adenosyl-L-homocysteine is bound by residues Pro11, 87 to 89 (GGD), 117 to 118 (TS), and Met170.

It belongs to the precorrin methyltransferase family. Monomer.

The catalysed reaction is uroporphyrinogen III + 2 S-adenosyl-L-methionine = precorrin-2 + 2 S-adenosyl-L-homocysteine + H(+). The protein operates within cofactor biosynthesis; adenosylcobalamin biosynthesis; precorrin-2 from uroporphyrinogen III: step 1/1. It functions in the pathway porphyrin-containing compound metabolism; siroheme biosynthesis; precorrin-2 from uroporphyrinogen III: step 1/1. With respect to regulation, SUMT exhibits a substrate inhibition phenomenon at uroporphyrinogen III concentrations above 0.5 uM; this property might play a regulatory role in cobalamin biosynthesis. Functionally, catalyzes the two successive C-2 and C-7 methylation reactions involved in the conversion of uroporphyrinogen III to precorrin-2 via the intermediate formation of precorrin-1. It is a step in the biosynthesis of both cobalamin (vitamin B12) and siroheme. This chain is Uroporphyrinogen-III C-methyltransferase, found in Priestia megaterium (Bacillus megaterium).